A 1122-amino-acid polypeptide reads, in one-letter code: DNA polymerase (1122 aa).

This sequence belongs to the DNA polymerase type-B family. As to quaternary structure, heterodimer with the terminal protein; this heterodimer binds to bp 9 to 18 of the genome. Forms a complex with viral pTP, DBP and hosts NFIA and POU2F1/OCT1 for initiation of replication.

The protein localises to the host nucleus. The catalysed reaction is DNA(n) + a 2'-deoxyribonucleoside 5'-triphosphate = DNA(n+1) + diphosphate. Its function is as follows. Eukaryotic-type DNA polymerase involved in viral genomic replication. DNA synthesis is protein primed, and acts in a strand displacement replication. Assembles in complex with viral pTP, DBP, host NFIA and host POU2F1/OCT1 on viral origin of replication. The polymerase covalently transfers dCMP onto pTP, thereby initiating complementary strand synthesis. This chain is DNA polymerase, found in Human adenovirus B serotype 7 (HAdV-7).